The following is a 320-amino-acid chain: Acetyl-coenzyme A carboxylase carboxyl transferase subunit alpha (320 aa).

One can recognise a CoA carboxyltransferase C-terminal domain in the interval 41-295; that stretch reads RIEEKAGQAL…GDAIAQAFDE (255 aa).

Belongs to the AccA family. As to quaternary structure, acetyl-CoA carboxylase is a heterohexamer composed of biotin carboxyl carrier protein (AccB), biotin carboxylase (AccC) and two subunits each of ACCase subunit alpha (AccA) and ACCase subunit beta (AccD).

It is found in the cytoplasm. The catalysed reaction is N(6)-carboxybiotinyl-L-lysyl-[protein] + acetyl-CoA = N(6)-biotinyl-L-lysyl-[protein] + malonyl-CoA. It participates in lipid metabolism; malonyl-CoA biosynthesis; malonyl-CoA from acetyl-CoA: step 1/1. In terms of biological role, component of the acetyl coenzyme A carboxylase (ACC) complex. First, biotin carboxylase catalyzes the carboxylation of biotin on its carrier protein (BCCP) and then the CO(2) group is transferred by the carboxyltransferase to acetyl-CoA to form malonyl-CoA. This is Acetyl-coenzyme A carboxylase carboxyl transferase subunit alpha from Bradyrhizobium sp. (strain ORS 278).